The sequence spans 60 residues: Photosystem II reaction center protein L (60 aa).

A helical membrane pass occupies residues 39–59 (SLYWGLLLIFVLAVLFSSYIF).

This sequence belongs to the PsbL family. In terms of assembly, PSII is composed of 1 copy each of membrane proteins PsbA, PsbB, PsbC, PsbD, PsbE, PsbF, PsbH, PsbI, PsbJ, PsbK, PsbL, PsbM, PsbT, PsbX, PsbY, PsbZ, Psb30/Ycf12, at least 3 peripheral proteins of the oxygen-evolving complex and a large number of cofactors. It forms dimeric complexes.

The protein localises to the plastid. It is found in the chloroplast thylakoid membrane. One of the components of the core complex of photosystem II (PSII). PSII is a light-driven water:plastoquinone oxidoreductase that uses light energy to abstract electrons from H(2)O, generating O(2) and a proton gradient subsequently used for ATP formation. It consists of a core antenna complex that captures photons, and an electron transfer chain that converts photonic excitation into a charge separation. This subunit is found at the monomer-monomer interface and is required for correct PSII assembly and/or dimerization. The polypeptide is Photosystem II reaction center protein L (Oedogonium cardiacum (Filamentous green alga)).